The sequence spans 668 residues: Trehalase (668 aa).

The tract at residues 1 to 23 (MVLQQTEPTDGADRKASDGPLTV) is disordered.

The protein belongs to the glycosyl hydrolase 15 family. As to quaternary structure, homomultimer of 20 or more subunits. Mg(2+) is required as a cofactor. Phosphate serves as cofactor.

It catalyses the reaction alpha,alpha-trehalose + H2O = alpha-D-glucose + beta-D-glucose. The protein operates within glycan degradation; trehalose degradation; D-glucose from alpha,alpha-trehalose: step 1/1. Its activity is regulated as follows. Inhibited by pyrophosphate and polyphosphates. Also competitively inhibited by validoxylamine and castanospermine, but not by trehazolin. In terms of biological role, catalyzes the hydrolysis of alpha,alpha-trehalose into two molecules of D-glucose. Does not hydrolyze maltose, isomaltose, sucrose, cellobiose, p-nitrophenyl-alpha-D-glucopyranoside, and methyl-alpha-D-glucopyranoside. Is also inactive on alpha,beta-trehalose, beta,beta-trehalose, alpha,alpha-trehalose-6,6'-dibehenate, trehalulose, nigerose, and trehalose dimycolate. The sequence is that of Trehalase from Mycolicibacterium smegmatis (strain ATCC 700084 / mc(2)155) (Mycobacterium smegmatis).